The following is a 412-amino-acid chain: Stachydrine N-demethylase (412 aa).

The 106-residue stretch at 45 to 150 (LYAVPVCQLA…LRNLDGLIYI (106 aa)) folds into the Rieske domain. Cys-86, His-88, Cys-106, and His-109 together coordinate [2Fe-2S] cluster. Residues His-204, His-209, and Asp-360 each contribute to the Fe cation site.

It belongs to the bacterial ring-hydroxylating dioxygenase alpha subunit family. In terms of assembly, homotrimer. The system is probably composed of an oxygenase subunit (Stc2) and two reductase subunits (Stc3 and Stc4). The cofactor is [2Fe-2S] cluster. Requires Fe cation as cofactor.

It catalyses the reaction L-proline betaine + NADH + O2 + H(+) = N-methyl-L-proline + formaldehyde + NAD(+) + H2O. The enzyme catalyses L-proline betaine + NADPH + O2 + H(+) = N-methyl-L-proline + formaldehyde + NADP(+) + H2O. Its function is as follows. Monooxygenase involved in the catabolism of stachydrine (L-proline betaine), a source of carbon and nitrogen. Part of a Rieske-type oxygenase system that catalyzes the demethylation of stachydrine to produce N-methyl-L-proline (monomethylproline). Stc2 is the catalytic subunit. This chain is Stachydrine N-demethylase, found in Rhizobium meliloti (strain 1021) (Ensifer meliloti).